We begin with the raw amino-acid sequence, 563 residues long: Glutamate--tRNA ligase (563 aa).

Positions 61–94 are disordered; that stretch reads PEEQQKEVESLGGLEQHTKKEEKPKGLPELKNTE. A compositionally biased stretch (basic and acidic residues) spans 76 to 94; sequence QHTKKEEKPKGLPELKNTE. Positions 104 to 114 match the 'HIGH' region motif; the sequence is PNPSGPLHIGH.

This sequence belongs to the class-I aminoacyl-tRNA synthetase family. Glutamate--tRNA ligase type 2 subfamily.

Its subcellular location is the cytoplasm. It carries out the reaction tRNA(Glu) + L-glutamate + ATP = L-glutamyl-tRNA(Glu) + AMP + diphosphate. Its function is as follows. Catalyzes the attachment of glutamate to tRNA(Glu) in a two-step reaction: glutamate is first activated by ATP to form Glu-AMP and then transferred to the acceptor end of tRNA(Glu). The polypeptide is Glutamate--tRNA ligase (Methanosphaera stadtmanae (strain ATCC 43021 / DSM 3091 / JCM 11832 / MCB-3)).